Consider the following 78-residue polypeptide: Large ribosomal subunit protein bL28 (78 aa).

Belongs to the bacterial ribosomal protein bL28 family.

In Escherichia coli O139:H28 (strain E24377A / ETEC), this protein is Large ribosomal subunit protein bL28.